A 406-amino-acid chain; its full sequence is MAAGAGAGSAPRWLRALSEPLSAAQLRRLEEHRYSAAGVSLLEPPLQLYWTWLLQWIPLWMAPNSITLLGLAVNVVTTLVLISYCPTATEEAPYWTYLLCALGLFIYQSLDAIDGKQARRTNSCSPLGELFDHGCDSLSTVFMAVGASIAARLGTYPDWFFFCSFIGMFVFYCAHWQTYVSGMLRFGKVDVTEIQIALVIVFVLSAFGGATMWDYTIPILEIKLKILPVLGFLGGVIFSCSNYFHVILHGGVGKNGSTIAGTSVLSPGLHIGLIIILAIMIYKKSATDVFEKHPCLYILMFGCVFAKVSQKLVVAHMTKSELYLQDTVFLGPGLLFLDQYFNNFIDEYVVLWMAMVISSFDMVIYFSALCLQISRHLHLNIFKTACHQAPEQVQVLSSKSHQNNMD.

Position 2 is an N-acetylalanine (alanine 2). Residues 2 to 62 (AAGAGAGSAP…LLQWIPLWMA (61 aa)) are Cytoplasmic-facing. Residues 63–83 (PNSITLLGLAVNVVTTLVLIS) traverse the membrane as a helical segment. Asparagine 64 provides a ligand contact to CDP-choline. The Lumenal portion of the chain corresponds to 84 to 93 (YCPTATEEAP). The chain crosses the membrane as a helical span at residues 94–118 (YWTYLLCALGLFIYQSLDAIDGKQA). 2 residues coordinate Mg(2+): aspartate 111 and aspartate 114. CDP-choline is bound at residue arginine 119. Residues 119 to 125 (RRTNSCS) are Cytoplasmic-facing. A helical transmembrane segment spans residues 126-150 (PLGELFDHGCDSLSTVFMAVGASIA). Aspartate 132 is a Mg(2+) binding site. The active-site Proton acceptor is the histidine 133. Aspartate 136 provides a ligand contact to Mg(2+). Residues 151 to 160 (ARLGTYPDWF) are Lumenal-facing. The chain crosses the membrane as a helical span at residues 161 to 179 (FFCSFIGMFVFYCAHWQTY). Residues 180 to 190 (VSGMLRFGKVD) lie on the Cytoplasmic side of the membrane. A helical transmembrane segment spans residues 191-207 (VTEIQIALVIVFVLSAF). The Lumenal segment spans residues 208-222 (GGATMWDYTIPILEI). Residues 223 to 248 (KLKILPVLGFLGGVIFSCSNYFHVIL) form a helical membrane-spanning segment. The Cytoplasmic portion of the chain corresponds to 249–265 (HGGVGKNGSTIAGTSVL). A helical transmembrane segment spans residues 266–281 (SPGLHIGLIIILAIMI). The Lumenal portion of the chain corresponds to 282 to 293 (YKKSATDVFEKH). The chain crosses the membrane as a helical span at residues 294–316 (PCLYILMFGCVFAKVSQKLVVAH). Topologically, residues 317-329 (MTKSELYLQDTVF) are cytoplasmic. The helical transmembrane segment at 330–339 (LGPGLLFLDQ) threads the bilayer. Residues 340-346 (YFNNFID) lie on the Lumenal side of the membrane. The helical transmembrane segment at 347–376 (EYVVLWMAMVISSFDMVIYFSALCLQISRH) threads the bilayer. Residues 377-406 (LHLNIFKTACHQAPEQVQVLSSKSHQNNMD) are Cytoplasmic-facing.

It belongs to the CDP-alcohol phosphatidyltransferase class-I family. The cofactor is Mg(2+). Requires Mn(2+) as cofactor. As to expression, highly expressed in testis, colon, small intestine, heart, prostate and spleen. Also detected in kidney, skeletal muscle, pancreas, leukocytes, ovary and thymus. Weakly expressed in the brain, placenta and lung. Overexpressed in cancerous breast epithelial cell lines.

It is found in the golgi apparatus membrane. It catalyses the reaction CDP-choline + a 1,2-diacyl-sn-glycerol = a 1,2-diacyl-sn-glycero-3-phosphocholine + CMP + H(+). It carries out the reaction 1-octadecanoyl-2-(5Z,8Z,11Z,14Z-eicosatetraenoyl)-sn-glycerol + CDP-choline = 1-octadecanoyl-2-(5Z,8Z,11Z,14Z-eicosatetraenoyl)-sn-glycero-3-phosphocholine + CMP + H(+). The catalysed reaction is 1-hexadecanoyl-2-(9Z-octadecenoyl)-sn-glycerol + CDP-choline = 1-hexadecanoyl-2-(9Z-octadecenoyl)-sn-glycero-3-phosphocholine + CMP + H(+). The enzyme catalyses 1-hexadecanoyl-2-(4Z,7Z,10Z,13Z,16Z,19Z-docosahexaenoyl)-sn-glycerol + CDP-choline = 1-hexadecanoyl-2-(4Z,7Z,10Z,13Z,16Z,19Z-docosahexaenoyl)-sn-glycero-3-phosphocholine + CMP + H(+). It catalyses the reaction 1,2-dioctanoyl-sn-glycerol + CDP-choline = 1,2-dioctanoyl-sn-glycero-3-phosphocholine + CMP + H(+). Its pathway is phospholipid metabolism; phosphatidylcholine biosynthesis; phosphatidylcholine from phosphocholine: step 2/2. Catalyzes the final step of de novo phosphatidylcholine (PC) synthesis, i.e. the transfer of choline phosphate from CDP-choline to the free hydroxyl of a diacylglycerol (DAG), producing a PC. It thereby plays a central role in the formation and maintenance of vesicular membranes. In Homo sapiens (Human), this protein is Cholinephosphotransferase 1.